The primary structure comprises 239 residues: Putative transcriptional regulator of 2-aminoethylphosphonate degradation operons (239 aa).

The HTH gntR-type domain occupies 8–76; the sequence is IPQYLLIKAQ…DRRGWFVTPE (69 aa). The segment at residues 36–55 is a DNA-binding region (H-T-H motif); that stretch reads ERELCAIFNTTRITIRESLA.

This is Putative transcriptional regulator of 2-aminoethylphosphonate degradation operons (phnR) from Salmonella typhi.